The chain runs to 316 residues: Vacuolar morphogenesis protein 7 (316 aa).

In terms of domain architecture, PX spans 1 to 124 (MAANSVGKMS…QDFLQLSKPN (124 aa)). Positions 168–186 (RARTKLHKLRERLEQDVQK) form a coiled coil. Positions 250–312 (MQMVRDQEQE…QIANKKARHF (63 aa)) constitute a t-SNARE coiled-coil homology domain.

In terms of assembly, possibly multimeric. Associates with VAM3.

It is found in the vacuole. Essential for proper morphogenesis of the vacuole. May exist as structural reinforcement on the surface of the vacuolar membrane and be required for maintenance against rupture by osmotic pressure. The sequence is that of Vacuolar morphogenesis protein 7 (VAM7) from Saccharomyces cerevisiae (strain ATCC 204508 / S288c) (Baker's yeast).